A 321-amino-acid polypeptide reads, in one-letter code: CRISPR-associated aCascade subunit Cas7/Csa2 2 (321 aa).

The protein belongs to the CRISPR-associated protein Cas7/Cst2/DevR family. Subtype I-a/Apern subfamily. Part of the aCascade ribonucleoprotein complex, minimally composed of Csa2 and Cas5a, which binds crRNA. Other possible components of aCascade in strain P1 are Cas6b (SSO1437) and Csa5 (SSO1443), while SSO1399, Cas5b (SSO1400) and SSO1401 have sometimes been seen weakly associated. Csa2 is probably the major RNA-binding subunit. The Csa2-Cas5a-crRNA complex also binds target DNA homologous to crRNA, probably forming an R-loop. Purified aCascade forms a filament about 6 nm in width.

CRISPR (clustered regularly interspaced short palindromic repeat) is an adaptive immune system that provides protection against mobile genetic elements (viruses, transposable elements and conjugative plasmids). CRISPR clusters contain spacers, sequences complementary to antecedent mobile elements, and target invading nucleic acids. CRISPR clusters are transcribed and processed into CRISPR RNA (crRNA). In Saccharolobus solfataricus (strain ATCC 35092 / DSM 1617 / JCM 11322 / P2) (Sulfolobus solfataricus), this protein is CRISPR-associated aCascade subunit Cas7/Csa2 2 (csa2b).